We begin with the raw amino-acid sequence, 147 residues long: Lysozyme C-2 (147 aa).

A signal peptide spans 1–18 (MKALVILGFLFLSVAVQG). The C-type lysozyme domain maps to 19-147 (KVFERCELAR…VSSYVEGCTL (129 aa)). Intrachain disulfides connect Cys-24/Cys-145, Cys-48/Cys-133, Cys-83/Cys-99, and Cys-95/Cys-113. Active-site residues include Glu-53 and Asp-71.

The protein belongs to the glycosyl hydrolase 22 family. In terms of assembly, monomer. In terms of tissue distribution, stomach-specific.

The enzyme catalyses Hydrolysis of (1-&gt;4)-beta-linkages between N-acetylmuramic acid and N-acetyl-D-glucosamine residues in a peptidoglycan and between N-acetyl-D-glucosamine residues in chitodextrins.. Its function is as follows. Lysozymes have primarily a bacteriolytic function; those in tissues and body fluids are associated with the monocyte-macrophage system and enhance the activity of immunoagents. The chain is Lysozyme C-2 (LYZ2) from Bos taurus (Bovine).